We begin with the raw amino-acid sequence, 132 residues long: Histone H2B.2 (132 aa).

Basic and acidic residues predominate over residues 1–19; sequence MAPKAEKKPASKAPAEKKP. The interval 1–39 is disordered; it reads MAPKAEKKPASKAPAEKKPAAKKTSSSVDPSKKRTKARK. Lys7 and Lys8 each carry N6-acetyllysine; alternate. Glycyl lysine isopeptide (Lys-Gly) (interchain with G-Cter in SUMO); alternate cross-links involve residues Lys7 and Lys8. Ser11 carries the phosphoserine modification. Lys12 carries the N6-acetyllysine modification. Lys17 carries the post-translational modification N6-acetyllysine; alternate. A Glycyl lysine isopeptide (Lys-Gly) (interchain with G-Cter in SUMO); alternate cross-link involves residue Lys17. A Glycyl lysine isopeptide (Lys-Gly) (interchain with G-Cter in SUMO) cross-link involves residue Lys18. Lys125 participates in a covalent cross-link: Glycyl lysine isopeptide (Lys-Gly) (interchain with G-Cter in ubiquitin).

The protein belongs to the histone H2B family. The nucleosome is a histone octamer containing two molecules each of H2A, H2B, H3 and H4 assembled in one H3-H4 heterotetramer and two H2A-H2B heterodimers. The octamer wraps approximately 147 bp of DNA. Post-translationally, monoubiquitinated by the UBC2-BRE1 complex to form H2BK123ub1. H2BK123ub1 gives a specific tag for epigenetic transcriptional activation and is also prerequisite for H3K4me and H3K79me formation. H2BK123ub1 also modulates the formation of double-strand breaks during meiosis and is a prerequisite for DNA-damage checkpoint activation. In terms of processing, phosphorylated by STE20 to form H2BS10ph during progression through meiotic prophase. May be correlated with chromosome condensation. Acetylated by GCN5 to form H2BK11ac and H2BK16ac. H2BK16ac can also be formed by ESA1. Acetylation of N-terminal lysines and particularly formation of H2BK11acK16ac has a positive effect on transcription. Post-translationally, sumoylation to form H2BK6su or H2BK7su, and probably also H2BK16su or H2BK17su, occurs preferentially near the telomeres and represses gene transcription.

The protein localises to the nucleus. It is found in the chromosome. Its function is as follows. Core component of nucleosome. Nucleosomes wrap and compact DNA into chromatin, limiting DNA accessibility to the cellular machineries which require DNA as a template. Histones thereby play a central role in transcription regulation, DNA repair, DNA replication and chromosomal stability. DNA accessibility is regulated via a complex set of post-translational modifications of histones, also called histone code, and nucleosome remodeling. This is Histone H2B.2 (HTB1) from Kluyveromyces lactis (strain ATCC 8585 / CBS 2359 / DSM 70799 / NBRC 1267 / NRRL Y-1140 / WM37) (Yeast).